The following is a 128-amino-acid chain: Large ribosomal subunit protein bL12 (128 aa).

This sequence belongs to the bacterial ribosomal protein bL12 family. In terms of assembly, homodimer. Part of the ribosomal stalk of the 50S ribosomal subunit. Forms a multimeric L10(L12)X complex, where L10 forms an elongated spine to which 2 to 4 L12 dimers bind in a sequential fashion. Binds GTP-bound translation factors.

Its function is as follows. Forms part of the ribosomal stalk which helps the ribosome interact with GTP-bound translation factors. Is thus essential for accurate translation. This is Large ribosomal subunit protein bL12 from Kocuria rhizophila (strain ATCC 9341 / DSM 348 / NBRC 103217 / DC2201).